The primary structure comprises 313 residues: 4-diphosphocytidyl-2-C-methyl-D-erythritol kinase (313 aa).

Residue Lys-11 is part of the active site. 99–109 (PVAAGLAGGST) is an ATP binding site. Residue Asp-141 is part of the active site.

This sequence belongs to the GHMP kinase family. IspE subfamily.

It catalyses the reaction 4-CDP-2-C-methyl-D-erythritol + ATP = 4-CDP-2-C-methyl-D-erythritol 2-phosphate + ADP + H(+). Its pathway is isoprenoid biosynthesis; isopentenyl diphosphate biosynthesis via DXP pathway; isopentenyl diphosphate from 1-deoxy-D-xylulose 5-phosphate: step 3/6. Catalyzes the phosphorylation of the position 2 hydroxy group of 4-diphosphocytidyl-2C-methyl-D-erythritol. This Microcystis aeruginosa (strain NIES-843 / IAM M-2473) protein is 4-diphosphocytidyl-2-C-methyl-D-erythritol kinase.